A 63-amino-acid polypeptide reads, in one-letter code: Potassium channel toxin MeuTXKalpha4 (63 aa).

An N-terminal signal peptide occupies residues 1-28 (MSRLLIFILTAVVLSVIIDILNNSKVEG). Cystine bridges form between cysteine 35-cysteine 53, cysteine 39-cysteine 59, and cysteine 43-cysteine 61.

This sequence belongs to the short scorpion toxin superfamily. Potassium channel inhibitor family. As to expression, expressed by the venom gland.

It is found in the secreted. May block voltage-gated potassium channels (Kv). In Mesobuthus eupeus (Lesser Asian scorpion), this protein is Potassium channel toxin MeuTXKalpha4.